Reading from the N-terminus, the 342-residue chain is Serpentine receptor class r-10 (342 aa).

At 1-11 the chain is on the extracellular side; sequence MTGELWLTLVD. The chain crosses the membrane as a helical span at residues 12–32; it reads TADIVGFSMTFCVNIVLLFLL. At 33 to 38 the chain is on the cytoplasmic side; sequence KNRGKN. Residues 39-59 traverse the membrane as a helical segment; that stretch reads LGTYKHLMAFFSVFSIFYAII. The Extracellular segment spans residues 60 to 92; that stretch reads ESILRPIMHIENATFFLISRKRFNYSTRLGKIN. Asn71 and Asn83 each carry an N-linked (GlcNAc...) asparagine glycan. A helical membrane pass occupies residues 93 to 113; that stretch reads SAFYCACFATSFVVSGVHFVY. The Cytoplasmic segment spans residues 114-131; the sequence is RFFASCKPHLLRSFNMPY. The helical transmembrane segment at 132-152 threads the bilayer; sequence LLLWPLGCSIPVMMWASVSYF. Residues 153–202 lie on the Extracellular side of the membrane; that stretch reads LYPDTAFTEAAVTNVLNTHYHSIKKDNVSYIAYVYYQYDENGVRYVYLKN. N-linked (GlcNAc...) asparagine glycosylation occurs at Asn179. A helical membrane pass occupies residues 203 to 223; that stretch reads LLGCFVHYFVMSATFVVMFIC. Residues 224–257 are Cytoplasmic-facing; it reads GYLTWKTMRKHKTASDRTRQLQKQLFKALVLQTL. Residues 258 to 278 traverse the membrane as a helical segment; the sequence is IPTIFMYAPTGVMFIAPFFSI. Over 279 to 285 the chain is Extracellular; sequence NLNANAN. The helical transmembrane segment at 286 to 306 threads the bilayer; the sequence is FIVFCSFLYPGLDPLILILII. Residues 307–342 are Cytoplasmic-facing; that stretch reads RDFRQTVFKFFCLRKKNSVDESRSTTRANMSQVATH.

This sequence belongs to the nematode receptor-like protein str family. As to quaternary structure, interacts with odr-4.

The protein localises to the cell projection. Its subcellular location is the cilium membrane. Its function is as follows. An odorant receptor which affects chemotaxis to the volatile odorant diacetyl. Specifies AWA neuronal cell fate via the odr-7 pathway. The chain is Serpentine receptor class r-10 from Caenorhabditis briggsae.